We begin with the raw amino-acid sequence, 257 residues long: Zinc transporter ZupT (257 aa).

Transmembrane regions (helical) follow at residues 5–25, 32–52, and 61–81; these read LILT…GVLG, LLAF…LMEM, and GMSP…YFGL. Fe(2+) is bound by residues Asn-120 and Glu-123. Positions 123 and 148 each coordinate Zn(2+). A run of 4 helical transmembrane segments spans residues 137–157, 171–191, 195–215, and 236–256; these read LGFG…LAVA, ILWA…AWLI, MISP…MVAL, and GVLC…TAGI. Positions 149, 152, and 181 each coordinate Fe(2+). Glu-152 contributes to the Zn(2+) binding site.

Belongs to the ZIP transporter (TC 2.A.5) family. ZupT subfamily.

It is found in the cell inner membrane. The enzyme catalyses Zn(2+)(in) = Zn(2+)(out). Functionally, mediates zinc uptake. May also transport other divalent cations. In Escherichia coli O7:K1 (strain IAI39 / ExPEC), this protein is Zinc transporter ZupT.